A 426-amino-acid polypeptide reads, in one-letter code: Pregnancy-specific beta-1-glycoprotein 9 (426 aa).

The N-terminal stretch at 1–34 (MGPLPAPSCTQRITWKGLLLTASLLNFWNPPTTA) is a signal peptide. The 110-residue stretch at 35 to 144 (EVTIEAQPPK…IRHFTFTLYL (110 aa)) folds into the Ig-like V-type domain. N104 and N111 each carry an N-linked (GlcNAc...) asparagine glycan. A Cell attachment site motif is present at residues 127–129 (RGD). 3 consecutive Ig-like C2-type domains span residues 147–234 (PKPY…VTLN), 242–326 (PYIT…PVIL), and 335–410 (PRIY…KSMT). 3 disulfides stabilise this stretch: C169–C217, C262–C310, and C354–C394. N-linked (GlcNAc...) asparagine glycans are attached at residues N199, N268, N303, and N387.

It belongs to the immunoglobulin superfamily. CEA family. As to quaternary structure, interacts with latency-associated peptide; leading to TGFB1 activation.

Its subcellular location is the secreted. Binds to the small latent transforming growth factor-beta complex, consisting of the N-terminal TGFB1 latency-associated peptide (LAP) and the mature form of TGFB1, thereby leading to the activation of TGFB1. The activation of TGFB1 leads to stimulation of naive CD4(+) T-cells to increase FoxP3 expression and to an increase in the number of FoxP3(+) regulatory T-cells. Induces the differentiation of a suppressive CD4(+)LAP(+)FoxP3(-) T-cell subset. Induces the secretion of TGFB1 in macrophages, but not in activated CD4(+) T-cells. May reduce the expression of several pro-inflammatory cytokines and chemokines by CD4(+) T-cells, including IL2 and IL6. The polypeptide is Pregnancy-specific beta-1-glycoprotein 9 (PSG9) (Homo sapiens (Human)).